We begin with the raw amino-acid sequence, 89 residues long: Small ribosomal subunit protein uS15 (89 aa).

Over residues 1–21 (MVLDPTQKKSVIDAHAKHEGD) the composition is skewed to basic and acidic residues. The disordered stretch occupies residues 1 to 24 (MVLDPTQKKSVIDAHAKHEGDTGS).

Belongs to the universal ribosomal protein uS15 family. Part of the 30S ribosomal subunit. Forms a bridge to the 50S subunit in the 70S ribosome, contacting the 23S rRNA.

One of the primary rRNA binding proteins, it binds directly to 16S rRNA where it helps nucleate assembly of the platform of the 30S subunit by binding and bridging several RNA helices of the 16S rRNA. Functionally, forms an intersubunit bridge (bridge B4) with the 23S rRNA of the 50S subunit in the ribosome. The polypeptide is Small ribosomal subunit protein uS15 (Desulfovibrio desulfuricans (strain ATCC 27774 / DSM 6949 / MB)).